The chain runs to 251 residues: Hydroxyacylglutathione hydrolase (251 aa).

The Zn(2+) site is built by histidine 54, histidine 56, aspartate 58, histidine 59, histidine 113, aspartate 140, and histidine 178.

It belongs to the metallo-beta-lactamase superfamily. Glyoxalase II family. Monomer. Requires Zn(2+) as cofactor.

The enzyme catalyses an S-(2-hydroxyacyl)glutathione + H2O = a 2-hydroxy carboxylate + glutathione + H(+). It functions in the pathway secondary metabolite metabolism; methylglyoxal degradation; (R)-lactate from methylglyoxal: step 2/2. Thiolesterase that catalyzes the hydrolysis of S-D-lactoyl-glutathione to form glutathione and D-lactic acid. The sequence is that of Hydroxyacylglutathione hydrolase from Synechococcus sp. (strain CC9902).